We begin with the raw amino-acid sequence, 340 residues long: Tryptophan--tRNA ligase (340 aa).

Residues 11-13 and 19-20 contribute to the ATP site; these read RPT and GH. The 'HIGH' region signature appears at 12 to 20; sequence PTGKLHLGH. Aspartate 140 is a binding site for L-tryptophan. ATP is bound by residues 152 to 154, leucine 194, and 202 to 206; these read GND and KMSKS. Positions 202–206 match the 'KMSKS' region motif; sequence KMSKS.

It belongs to the class-I aminoacyl-tRNA synthetase family. Homodimer.

It localises to the cytoplasm. It carries out the reaction tRNA(Trp) + L-tryptophan + ATP = L-tryptophyl-tRNA(Trp) + AMP + diphosphate + H(+). Functionally, catalyzes the attachment of tryptophan to tRNA(Trp). The polypeptide is Tryptophan--tRNA ligase (Streptococcus pyogenes serotype M1).